The following is a 322-amino-acid chain: Phthalate dioxygenase reductase (322 aa).

The FAD-binding FR-type domain maps to 7–109 (DGFLRLKIAS…SLPRNEFPLD (103 aa)). Residues 56 to 57 (RT), 73 to 75 (AVK), 81 to 84 (RGGS), Thr-125, and Phe-226 contribute to the FMN site. The region spanning 239 to 322 (FTVRLSRSGT…AKSAELVLDL (84 aa)) is the 2Fe-2S ferredoxin-type domain. Cys-273 is a binding site for [2Fe-2S] cluster. Ser-275 is an FMN binding site. [2Fe-2S] cluster is bound by residues Cys-278, Cys-281, and Cys-309.

Belongs to the PDR/VanB family. In terms of assembly, monomer. The cofactor is FMN.

Its function is as follows. Component of the electron transfer chain involved in pyridine nucleotide-dependent dihydroxylation of phthalate. Utilizes FMN to mediate electron transfer from the two-electron donor, NADH, to the one-electron acceptor, (2Fe-2S). This is Phthalate dioxygenase reductase (ophA1) from Burkholderia cepacia (Pseudomonas cepacia).